The sequence spans 810 residues: MIPVTELRYFADTQPAYRILKPWWDVFTDYISIVMLMIAVFGGTLQVTQDKMICLPCKWVTKDSCNDSFRGWAAPGPEPTYPNSTILPTPDTGPTGIKYDLDRHQYNYVDAVCYENRLHWFAKYFPYLVLLHTLIFLACSNFWFKFPRTSSKLEHFVSILLKCFDSPWTTRALSETVVEESDPKPAFSKMNGSMDKKSSTVSEDVEATVPMLQRTKSRIEQGIVDRSETGVLDKKEGEQAKALFEKVKKFRTHVEEGDIVYRLYMRQTIIKVIKFILIICYTVYYVHNIKFDVDCTVDIESLTGYRTYRCAHPLATLFKILASFYISLVIFYGLICMYTLWWMLRRSLKKYSFESIREESSYSDIPDVKNDFAFMLHLIDQYDPLYSKRFAVFLSEVSENKLRQLNLNNEWTLDKLRQRLTKNAQDKLELHLFMLSGIPDTVFDLVELEVLKLELIPDVTIPPSIAQLTGLKELWLYHTAAKIEAPALAFLRENLRALHIKFTDIKEIPLWIYSLKTLEELHLTGNLSAENNRYIVIDGLRELKRLKVLRLKSNLSKLPQVVTDVGVHLQKLSINNEGTKLIVLNSLKKMANLTELELIRCDLERIPHSIFSLHNLQEIDLKDNNLKTIEEIISFQHLHRLTCLKLWYNHIAYIPIQIGNLTNLERLYLNRNKIEKIPTQLFYCRKLRYLDLSHNNLTFLPADIGLLQNLQNLAITANRIETLPPELFQCRKLRALHLGNNVLQSLPSRVGELTNLTQIELRGNRLECLPVELGECPLLKRSGLVVEEDLFNTLPPEVKERLWRADKEQA.

N-acetylmethionine is present on M1. The Cytoplasmic segment spans residues M1–W23. Residues W24–V47 traverse the membrane as a helical segment. Residues T48–K123 are Extracellular-facing. 3 cysteine pairs are disulfide-bonded: C54/C310, C57/C65, and C113/C295. N66 and N83 each carry an N-linked (GlcNAc...) asparagine glycan. A helical transmembrane segment spans residues Y124–F142. Residues W143 to Y264 are Cytoplasmic-facing. T200 is subject to Phosphothreonine. S202 carries the post-translational modification Phosphoserine. Residue T215 is modified to Phosphothreonine. S217 bears the Phosphoserine mark. The chain crosses the membrane as a helical span at residues M265 to V286. Residues H287–T316 are Extracellular-facing. A helical membrane pass occupies residues L317–W341. The Cytoplasmic segment spans residues W342–A810. LRR repeat units follow at residues E399 to K422, N423 to L445, E447 to L468, T469 to R492, E493 to L515, L518 to E542, L543 to V565, V567 to K589, M590 to L613, N615 to H637, H639 to L661, T662 to C684, K686 to L707, Q708 to C730, K732 to L753, T754 to C776, and L778 to R801. Residues L706–L707 carry the Di-leucine motif motif.

This sequence belongs to the LRRC8 family. As to quaternary structure, heterohexamer; oligomerizes with other LRRC8 proteins (LRRC8B, LRRC8C, LRRC8D and/or LRRC8E) to form a heterohexamer. Can form homohexamers in vitro, but these have lower conductance than heterohexamers. In vivo, the subunit composition may depend primarily on expression levels, and heterooligomeric channels containing various proportions of the different LRRC8 proteins may coexist. Interact with GRB2. Interacts with NOX4; this interaction prevents the ubiquitin-mediated degradation of LRRC8A. N-glycosylated. Expressed in brain, kidney, ovary, lung, liver, heart, and fetal brain and liver. Found at high levels in bone marrow; lower levels are detected in peripheral blood cells. Expressed on T-cells as well as on B-lineage cells.

It is found in the cell membrane. Its subcellular location is the lysosome membrane. The catalysed reaction is chloride(in) = chloride(out). It catalyses the reaction iodide(out) = iodide(in). It carries out the reaction taurine(out) = taurine(in). The enzyme catalyses L-aspartate(out) = L-aspartate(in). The catalysed reaction is L-glutamate(out) = L-glutamate(in). It catalyses the reaction myo-inositol(out) = myo-inositol(in). It carries out the reaction 2',3'-cGAMP(out) = 2',3'-cGAMP(in). With respect to regulation, inhibited by (4-[(2-butyl-6,7-dichloro-2-cyclopentyl-2,3-dihydro-1-oxo-1H-inden-5-yl)oxy]butanoic acid), which plugs the channel like a cork in a bottle by binding in the extracellular selectivity filter and sterically occluding ion conduction. Lipids may block conduction in closed heterohexameric channels. In terms of biological role, essential component of the volume-regulated anion channel (VRAC, also named VSOAC channel), an anion channel required to maintain a constant cell volume in response to extracellular or intracellular osmotic changes. The VRAC channel conducts iodide better than chloride and can also conduct organic osmolytes like taurine. Mediates efflux of amino acids, such as aspartate and glutamate, in response to osmotic stress. LRRC8A and LRRC8D are required for the uptake of the drug cisplatin. In complex with LRRC8C or LRRC8E, acts as a transporter of immunoreactive cyclic dinucleotide GMP-AMP (2'-3'-cGAMP), an immune messenger produced in response to DNA virus in the cytosol: mediates both import and export of 2'-3'-cGAMP, thereby promoting transfer of 2'-3'-cGAMP to bystander cells. In contrast, complexes containing LRRC8D inhibit transport of 2'-3'-cGAMP. Required for in vivo channel activity, together with at least one other family member (LRRC8B, LRRC8C, LRRC8D or LRRC8E); channel characteristics depend on the precise subunit composition. Can form functional channels by itself (in vitro). Involved in B-cell development: required for the pro-B cell to pre-B cell transition. Also required for T-cell development. Required for myoblast differentiation: VRAC activity promotes membrane hyperpolarization and regulates insulin-stimulated glucose metabolism and oxygen consumption. Also acts as a regulator of glucose-sensing in pancreatic beta cells: VRAC currents, generated in response to hypotonicity- or glucose-induced beta cell swelling, depolarize cells, thereby causing electrical excitation, leading to increase glucose sensitivity and insulin secretion. Also plays a role in lysosome homeostasis by forming functional lysosomal VRAC channels in response to low cytoplasmic ionic strength condition: lysosomal VRAC channels are necessary for the formation of large lysosome-derived vacuoles, which store and then expel excess water to maintain cytosolic water homeostasis. Acts as a key factor in NLRP3 inflammasome activation by modulating itaconate efflux and mitochondria function. The protein is Volume-regulated anion channel subunit LRRC8A of Homo sapiens (Human).